Consider the following 467-residue polypeptide: Ribulose bisphosphate carboxylase large chain (467 aa).

Positions 1–2 are excised as a propeptide; sequence MS. N-acetylproline is present on proline 3. At lysine 14 the chain carries N6,N6,N6-trimethyllysine. Asparagine 123 and threonine 173 together coordinate substrate. Lysine 175 functions as the Proton acceptor in the catalytic mechanism. Residue lysine 177 coordinates substrate. The Mg(2+) site is built by lysine 201, aspartate 203, and glutamate 204. At lysine 201 the chain carries N6-carboxylysine. The active-site Proton acceptor is histidine 294. 3 residues coordinate substrate: arginine 295, histidine 327, and serine 379.

The protein belongs to the RuBisCO large chain family. Type I subfamily. As to quaternary structure, heterohexadecamer of 8 large chains and 8 small chains; disulfide-linked. The disulfide link is formed within the large subunit homodimers. Mg(2+) is required as a cofactor. In terms of processing, the disulfide bond which can form in the large chain dimeric partners within the hexadecamer appears to be associated with oxidative stress and protein turnover.

The protein localises to the plastid. The protein resides in the chloroplast. The catalysed reaction is 2 (2R)-3-phosphoglycerate + 2 H(+) = D-ribulose 1,5-bisphosphate + CO2 + H2O. It catalyses the reaction D-ribulose 1,5-bisphosphate + O2 = 2-phosphoglycolate + (2R)-3-phosphoglycerate + 2 H(+). Functionally, ruBisCO catalyzes two reactions: the carboxylation of D-ribulose 1,5-bisphosphate, the primary event in carbon dioxide fixation, as well as the oxidative fragmentation of the pentose substrate in the photorespiration process. Both reactions occur simultaneously and in competition at the same active site. This Serenoa repens (Saw palmetto) protein is Ribulose bisphosphate carboxylase large chain.